The primary structure comprises 508 residues: Probable cytosol aminopeptidase (508 aa).

Lysine 276 and aspartate 281 together coordinate Mn(2+). Residue lysine 288 is part of the active site. Mn(2+) is bound by residues aspartate 299, aspartate 358, and glutamate 360. Arginine 362 is an active-site residue.

Belongs to the peptidase M17 family. Mn(2+) serves as cofactor.

It localises to the cytoplasm. The catalysed reaction is Release of an N-terminal amino acid, Xaa-|-Yaa-, in which Xaa is preferably Leu, but may be other amino acids including Pro although not Arg or Lys, and Yaa may be Pro. Amino acid amides and methyl esters are also readily hydrolyzed, but rates on arylamides are exceedingly low.. It carries out the reaction Release of an N-terminal amino acid, preferentially leucine, but not glutamic or aspartic acids.. Presumably involved in the processing and regular turnover of intracellular proteins. Catalyzes the removal of unsubstituted N-terminal amino acids from various peptides. The sequence is that of Probable cytosol aminopeptidase from Chlorobium luteolum (strain DSM 273 / BCRC 81028 / 2530) (Pelodictyon luteolum).